The sequence spans 284 residues: Tryptophan 2,3-dioxygenase (284 aa).

Residues 51–55, Y113, and R117 contribute to the substrate site; that span reads FIIQH. H240 is a heme binding site. Residue T254 coordinates substrate.

The protein belongs to the tryptophan 2,3-dioxygenase family. Homotetramer. Requires heme as cofactor.

It carries out the reaction L-tryptophan + O2 = N-formyl-L-kynurenine. It participates in amino-acid degradation; L-tryptophan degradation via kynurenine pathway; L-kynurenine from L-tryptophan: step 1/2. Functionally, heme-dependent dioxygenase that catalyzes the oxidative cleavage of the L-tryptophan (L-Trp) pyrrole ring and converts L-tryptophan to N-formyl-L-kynurenine. Catalyzes the oxidative cleavage of the indole moiety. The polypeptide is Tryptophan 2,3-dioxygenase (Arthrobacter sp. (strain FB24)).